Consider the following 250-residue polypeptide: Functional amyloid sbunit FapE (250 aa).

The first 27 residues, 1–27 (MLREHAMYTHHCFVLACCLGAALPAPA), serve as a signal peptide directing secretion.

Belongs to the FapE family. A minor component of purified amyloid fibrils. Fibrils are resistant to boiling in 2% (weight/vol) SDS and require &gt;90% (vol/vol) formic acid to dissolve.

It is found in the fimbrium. The protein resides in the secreted. A minor component of the functional amyloid in this bacterium. Upon overexpression of the endogenous six-gene locus (fapA-fapF), cells form large clumps during liquid growth, make large amounts of biofilm and produce amyloid fibrils. The protein is Functional amyloid sbunit FapE of Pseudomonas aeruginosa (strain ATCC 15692 / DSM 22644 / CIP 104116 / JCM 14847 / LMG 12228 / 1C / PRS 101 / PAO1).